The following is a 682-amino-acid chain: DNA-directed RNA polymerase subunit beta' (682 aa).

The Zn(2+) site is built by cysteine 69, cysteine 71, cysteine 87, and cysteine 90. Aspartate 489, aspartate 491, and aspartate 493 together coordinate Mg(2+).

This sequence belongs to the RNA polymerase beta' chain family. RpoC1 subfamily. In plastids the minimal PEP RNA polymerase catalytic core is composed of four subunits: alpha, beta, beta', and beta''. When a (nuclear-encoded) sigma factor is associated with the core the holoenzyme is formed, which can initiate transcription. Mg(2+) is required as a cofactor. Requires Zn(2+) as cofactor.

Its subcellular location is the plastid. The protein localises to the chloroplast. The catalysed reaction is RNA(n) + a ribonucleoside 5'-triphosphate = RNA(n+1) + diphosphate. DNA-dependent RNA polymerase catalyzes the transcription of DNA into RNA using the four ribonucleoside triphosphates as substrates. This chain is DNA-directed RNA polymerase subunit beta', found in Vitis vinifera (Grape).